We begin with the raw amino-acid sequence, 222 residues long: Coiled-coil domain-containing protein 70 (222 aa).

Positions 129–153 (NALWERDRNLLQEDKALWEEEKALW) form a coiled coil.

This Homo sapiens (Human) protein is Coiled-coil domain-containing protein 70.